A 1144-amino-acid polypeptide reads, in one-letter code: ATP-dependent helicase/deoxyribonuclease subunit B (1144 aa).

Residues 1 to 276 enclose the UvrD-like helicase ATP-binding domain; it reads MAIRYVFGRA…IDLDRNERPV (276 aa). ATP is bound at residue 8 to 15; the sequence is GRAGRGKS. Residues 274–584 form the UvrD-like helicase C-terminal domain; sequence RPVLPKVQEI…LVGSIERSKS (311 aa). [4Fe-4S] cluster-binding residues include Cys784, Cys1102, Cys1105, and Cys1111.

The protein belongs to the helicase family. AddB/RexB type 1 subfamily. In terms of assembly, heterodimer of AddA and AddB. The cofactor is Mg(2+). Requires [4Fe-4S] cluster as cofactor.

The heterodimer acts as both an ATP-dependent DNA helicase and an ATP-dependent, dual-direction single-stranded exonuclease. Recognizes the chi site generating a DNA molecule suitable for the initiation of homologous recombination. The AddB subunit has 5' -&gt; 3' nuclease activity but not helicase activity. The polypeptide is ATP-dependent helicase/deoxyribonuclease subunit B (Alkaliphilus oremlandii (strain OhILAs) (Clostridium oremlandii (strain OhILAs))).